A 449-amino-acid chain; its full sequence is Heterogeneous nuclear ribonucleoprotein H2 (449 aa).

Residue Met1 is modified to N-acetylmethionine. An N-acetylmethionine; in Heterogeneous nuclear ribonucleoprotein H2, N-terminally processed modification is found at Met2. In terms of domain architecture, RRM 1 spans 11 to 90; that stretch reads FVVKVRGLPW…RYVEVFKSNS (80 aa). At Ser23 the chain carries Phosphoserine. Lys35 participates in a covalent cross-link: Glycyl lysine isopeptide (Lys-Gly) (interchain with G-Cter in SUMO2). Phosphoserine occurs at positions 54 and 63. Lys87 is covalently cross-linked (Glycyl lysine isopeptide (Lys-Gly) (interchain with G-Cter in SUMO2)). Ser90 carries the phosphoserine modification. A Glycyl lysine isopeptide (Lys-Gly) (interchain with G-Cter in SUMO2) cross-link involves residue Lys98. Positions 111–188 constitute an RRM 2 domain; that stretch reads GFVRLRGLPF…RYIEIFKSSR (78 aa). Arg233 is subject to Dimethylated arginine; alternate. Arg233 carries the omega-N-methylarginine; alternate modification. The 1-1 repeat unit spans residues 234 to 249; the sequence is GAYGGGYGGYDDYGGY. Positions 234-433 are 2 X 16 AA Gly-rich approximate repeats; the sequence is GAYGGGYGGY…YGGQSSMSGY (200 aa). At Tyr246 the chain carries Phosphotyrosine. The RRM 3 domain occupies 289–364; that stretch reads HCVHMRGLPY…RYVELFLNST (76 aa). The residue at position 310 (Ser310) is a Phosphoserine. 3 tandem repeats follow at residues 354 to 372, 374 to 392, and 418 to 433. Residues 354-392 are 2 X 19 AA perfect repeats; that stretch reads HRYVELFLNSTAGTSGGAYDHSYVELFLNSTAGASGGAY.

In terms of assembly, component of a ribonucleoprotein complex containing mRNAs and RNA-binding proteins including DDX5, HNRNPH2 and SRSF1 as well as splicing regulator ARVCF. Interacts with TXNL4/DIM1. As to expression, expressed ubiquitously.

It is found in the nucleus. The protein localises to the nucleoplasm. Functionally, this protein is a component of the heterogeneous nuclear ribonucleoprotein (hnRNP) complexes which provide the substrate for the processing events that pre-mRNAs undergo before becoming functional, translatable mRNAs in the cytoplasm. Binds poly(RG). In Homo sapiens (Human), this protein is Heterogeneous nuclear ribonucleoprotein H2 (HNRNPH2).